The sequence spans 514 residues: Glutathione-binding protein GsiB (514 aa).

An N-terminal signal peptide occupies residues 1 to 26 (MARAVHRSGLVALGIATALMASCAFA).

It belongs to the bacterial solute-binding protein 5 family. In terms of assembly, the complex is composed of two ATP-binding proteins (GsiA), two transmembrane proteins (GsiC and GsiD) and a solute-binding protein (GsiB).

It is found in the periplasm. Its function is as follows. Part of the ABC transporter complex GsiABCD involved in glutathione import. Binds glutathione. In Shigella flexneri serotype 5b (strain 8401), this protein is Glutathione-binding protein GsiB.